Consider the following 256-residue polypeptide: Deoxyribose-phosphate aldolase (256 aa).

The active-site Proton donor/acceptor is Asp-102. Lys-165 functions as the Schiff-base intermediate with acetaldehyde in the catalytic mechanism. Catalysis depends on Lys-197, which acts as the Proton donor/acceptor.

It belongs to the DeoC/FbaB aldolase family. DeoC type 2 subfamily.

It is found in the cytoplasm. The catalysed reaction is 2-deoxy-D-ribose 5-phosphate = D-glyceraldehyde 3-phosphate + acetaldehyde. The protein operates within carbohydrate degradation; 2-deoxy-D-ribose 1-phosphate degradation; D-glyceraldehyde 3-phosphate and acetaldehyde from 2-deoxy-alpha-D-ribose 1-phosphate: step 2/2. Functionally, catalyzes a reversible aldol reaction between acetaldehyde and D-glyceraldehyde 3-phosphate to generate 2-deoxy-D-ribose 5-phosphate. The protein is Deoxyribose-phosphate aldolase of Shewanella baltica (strain OS223).